A 108-amino-acid chain; its full sequence is Large ribosomal subunit protein bL21 (108 aa).

The protein belongs to the bacterial ribosomal protein bL21 family. Part of the 50S ribosomal subunit. Contacts protein L20.

Functionally, this protein binds to 23S rRNA in the presence of protein L20. This is Large ribosomal subunit protein bL21 from Acidobacterium capsulatum (strain ATCC 51196 / DSM 11244 / BCRC 80197 / JCM 7670 / NBRC 15755 / NCIMB 13165 / 161).